We begin with the raw amino-acid sequence, 176 residues long: MSWRSEQIWIELIPGSRRESNFLWAFILFFGSLEFILVGTASYLRQNLIAFFPQGMVMTFYGISGLFISLYLLSMLFWNVGGGYHQFDKTRGVICIFRWVFPGRNRRLLLRFFMKDIRSIRIEVKEGFYTRRVLYMDIRGQKGIPLTRTDEVLTPVEIEKKAAELASFLCVPIEVL.

2 helical membrane passes run 22-42 (FLWAFILFFGSLEFILVGTAS) and 57-77 (VMTFYGISGLFISLYLLSMLF).

It belongs to the Ycf4 family.

The protein localises to the plastid thylakoid membrane. Its function is as follows. Seems to be required for the assembly of the photosystem I complex. This Cuscuta obtusiflora (Peruvian dodder) protein is Photosystem I assembly protein Ycf4.